Here is a 519-residue protein sequence, read N- to C-terminus: Major facilitator superfamily domain-containing protein 8 (519 aa).

Positions 1–25 (MANLGSEAEREPLLGPGSPGSREWS) are disordered. Topologically, residues 1–41 (MANLGSEAEREPLLGPGSPGSREWSEIETQEHYKSRWKSVR) are cytoplasmic. The short motif at 13 to 14 (LL) is the Dileucine internalization motif element. The helical transmembrane segment at 42 to 62 (ILYLTMFLSSVGFSIVIMSIW) threads the bilayer. At 63–75 (PYLQKIDQTADAS) the chain is on the extracellular side. Residues 76 to 96 (FLGWVIASYSLGQMVASPLFG) form a helical membrane-spanning segment. Residues 97–106 (LWSNYRPRKE) lie on the Cytoplasmic side of the membrane. A helical transmembrane segment spans residues 107–127 (PLIVSISISVAANCLYAYVHV). The Extracellular portion of the chain corresponds to 128-140 (PAAHNKYYMLIAR). Residues 141 to 161 (GLVGFGAGNVAVVRSYIAGAT) form a helical membrane-spanning segment. Residues 162–174 (SLQERTNAMANTS) lie on the Cytoplasmic side of the membrane. Residues 175–195 (TCQALGFILGPVFQTCFALIG) traverse the membrane as a helical segment. The Extracellular portion of the chain corresponds to 196 to 212 (EKGVTWDIIKLQVNMYT). A helical transmembrane segment spans residues 213–233 (APVLLAAFLGILNIILILFIL). The Cytoplasmic portion of the chain corresponds to 234–267 (REHRVDDLGRQCKSVNFQEENTDEPQIPEGSIDQ). Residues 268–288 (VAVVATNIVFFVVLFIFAVYE) traverse the membrane as a helical segment. The Extracellular segment spans residues 289 to 310 (TILTPLTLDMYAWTQEQAVLYD). The helical transmembrane segment at 311–331 (GILLVAFGVEAVLVFMGVKLL) threads the bilayer. Residues 332 to 338 (SKKIGER) are Cytoplasmic-facing. Residues 339–359 (AILLGGFVVVWVGFFILLPWG) traverse the membrane as a helical segment. The Extracellular segment spans residues 360-416 (NQFPKIQWEDLHNSSTPNTTFGEIIIGLWNSSREDHSEQPTGCPIEQTWCLYTPVIH). N-linked (GlcNAc...) asparagine glycosylation is found at N372 and N377. A helical transmembrane segment spans residues 417–439 (LAQFLTAAVLIGTGYPACSVMSY). The Cytoplasmic portion of the chain corresponds to 440–452 (TLYSKVLGPKPQG). Residues 453–473 (IYMGWLTTSGSAARILGPVFI) traverse the membrane as a helical segment. At 474–483 (SHVYTYLGPR) the chain is on the extracellular side. The chain crosses the membrane as a helical span at residues 484–504 (WAFSLVCGIVVLTILLIGAVY). Over 505–519 (KRLVAFSVRYMRIQE) the chain is Cytoplasmic.

The protein belongs to the major facilitator superfamily.

It localises to the endosome membrane. Its subcellular location is the lysosome membrane. The catalysed reaction is chloride(in) = chloride(out). It catalyses the reaction iodide(out) = iodide(in). It carries out the reaction fluoride(in) = fluoride(out). Functionally, outward-rectifying chloride channel involved in endolysosomal chloride homeostasis, membrane fusion and function. Conducts chloride currents up to hundreds of picoamperes. Regulates lysosomal calcium content by reducing the lysosomal membrane potential, thereby activating TRPML1 channel and further release of lysosomal calcium ions. Regulates the pH in endolysosomal compartments and may contribute to progressive acidification from endosome to lysosome. Permeable to other halides such as iodide and fluoride ions. This chain is Major facilitator superfamily domain-containing protein 8, found in Mus musculus (Mouse).